The chain runs to 447 residues: Tubulin beta chain (447 aa).

8 residues coordinate GTP: glutamine 11, glutamate 69, serine 138, glycine 142, threonine 143, glycine 144, asparagine 204, and asparagine 226. Mg(2+) is bound at residue glutamate 69. Residues 427–447 (EAHMDDEEAEEAYEDEAPPEE) form a disordered region. Positions 430–447 (MDDEEAEEAYEDEAPPEE) are enriched in acidic residues.

Belongs to the tubulin family. Dimer of alpha and beta chains. A typical microtubule is a hollow water-filled tube with an outer diameter of 25 nm and an inner diameter of 15 nM. Alpha-beta heterodimers associate head-to-tail to form protofilaments running lengthwise along the microtubule wall with the beta-tubulin subunit facing the microtubule plus end conferring a structural polarity. Microtubules usually have 13 protofilaments but different protofilament numbers can be found in some organisms and specialized cells. Requires Mg(2+) as cofactor.

The protein resides in the cytoplasm. It localises to the cytoskeleton. Its function is as follows. Tubulin is the major constituent of microtubules, a cylinder consisting of laterally associated linear protofilaments composed of alpha- and beta-tubulin heterodimers. Microtubules grow by the addition of GTP-tubulin dimers to the microtubule end, where a stabilizing cap forms. Below the cap, tubulin dimers are in GDP-bound state, owing to GTPase activity of alpha-tubulin. The sequence is that of Tubulin beta chain (TBB1) from Uromyces fabae (Rust fungus).